The following is a 307-amino-acid chain: Ornithine carbamoyltransferase (307 aa).

Carbamoyl phosphate contacts are provided by residues 53 to 56 (STRT), Gln-80, Arg-104, and 131 to 134 (HPCQ). Residues Asn-162, Asp-220, and 224–225 (SM) contribute to the L-ornithine site. Residues 260-261 (CL) and Arg-288 each bind carbamoyl phosphate.

The protein belongs to the aspartate/ornithine carbamoyltransferase superfamily. OTCase family.

It is found in the cytoplasm. The enzyme catalyses carbamoyl phosphate + L-ornithine = L-citrulline + phosphate + H(+). Its pathway is amino-acid biosynthesis; L-arginine biosynthesis; L-arginine from L-ornithine and carbamoyl phosphate: step 1/3. Reversibly catalyzes the transfer of the carbamoyl group from carbamoyl phosphate (CP) to the N(epsilon) atom of ornithine (ORN) to produce L-citrulline. The protein is Ornithine carbamoyltransferase of Nitrosomonas europaea (strain ATCC 19718 / CIP 103999 / KCTC 2705 / NBRC 14298).